The following is a 151-amino-acid chain: 3-dehydroquinate dehydratase 1 (151 aa).

The active-site Proton acceptor is tyrosine 23. The substrate site is built by asparagine 75, histidine 81, and aspartate 88. Histidine 101 (proton donor) is an active-site residue. Substrate is bound by residues 102-103 and arginine 112; that span reads LS.

The protein belongs to the type-II 3-dehydroquinase family. In terms of assembly, homododecamer.

The catalysed reaction is 3-dehydroquinate = 3-dehydroshikimate + H2O. It functions in the pathway metabolic intermediate biosynthesis; chorismate biosynthesis; chorismate from D-erythrose 4-phosphate and phosphoenolpyruvate: step 3/7. Its function is as follows. Catalyzes a trans-dehydration via an enolate intermediate. In Pseudomonas putida (strain ATCC 47054 / DSM 6125 / CFBP 8728 / NCIMB 11950 / KT2440), this protein is 3-dehydroquinate dehydratase 1 (aroQ1).